The primary structure comprises 107 residues: Thioredoxin (107 aa).

Residues 2 to 107 (VVHIENLNAF…TLKQKINDHK (106 aa)) enclose the Thioredoxin domain. Active-site nucleophile residues include C32 and C35. Cysteines 32 and 35 form a disulfide. S-nitrosocysteine is present on residues C71 and C75.

Belongs to the thioredoxin family. Post-translationally, may be nitrosylated on several cysteine residues, depending on the oxidation state. Nitrosylated Cys-75 may serve as donor for nitrosylation of target proteins.

The protein localises to the nucleus. It is found in the cytoplasm. The protein resides in the secreted. Its function is as follows. Participates in various redox reactions through the reversible oxidation of its active center dithiol to a disulfide and catalyzes dithiol-disulfide exchange reactions. Plays a role in the reversible S-nitrosylation of cysteine residues in target proteins, and thereby contributes to the response to intracellular nitric oxide. Nitrosylates the active site Cys of CASP3 in response to nitric oxide (NO), and thereby inhibits caspase-3 activity. Induces the FOS/JUN AP-1 DNA binding activity in ionizing radiation (IR) cells through its oxidation/reduction status and stimulates AP-1 transcriptional activity. In Ictalurus punctatus (Channel catfish), this protein is Thioredoxin (txn).